Here is a 1997-residue protein sequence, read N- to C-terminus: Protein MOR1 (1997 aa).

HEAT repeat units follow at residues Asp-48–Ala-86 and Val-164–Lys-202. Positions Arg-236–Val-264 are disordered. HEAT repeat units follow at residues Pro-321–Thr-359, Ser-362–Ile-400, and Leu-441–Met-479. The interval Ile-501 to Ala-576 is disordered. The segment covering Ala-504–Gly-520 has biased composition (polar residues). A compositionally biased stretch (low complexity) spans Ser-529 to Met-539. HEAT repeat units lie at residues Glu-848–Lys-886, Pro-890–Pro-928, Glu-931–Leu-969, and Pro-1007–Gln-1045. The tract at residues Met-1087–Gln-1115 is disordered. HEAT repeat units lie at residues Thr-1233–Glu-1259, Ala-1260–Ile-1294, Tyr-1295–Thr-1332, and Val-1334–Asp-1372. The segment covering Met-1400–Asp-1410 has biased composition (basic and acidic residues). The interval Met-1400–Arg-1436 is disordered. An HEAT 14 repeat occupies Arg-1539 to Asp-1579. Residues Met-1755–Asp-1776 form a disordered region. Residues Gly-1764–Asp-1776 show a composition bias toward polar residues.

The protein belongs to the TOG/XMAP215 family.

The protein resides in the cytoplasm. Its subcellular location is the cytoskeleton. Its function is as follows. Microtubule-associated protein that is essential for cortical microtubules organization and function. The sequence is that of Protein MOR1 (MOR1) from Oryza sativa subsp. japonica (Rice).